Consider the following 941-residue polypeptide: Bifunctional uridylyltransferase/uridylyl-removing enzyme (941 aa).

Residues 1–372 are uridylyltransferase; that stretch reads MAKHDLSDAT…RFAHRPRRIP (372 aa). The interval 373–728 is uridylyl-removing; it reads GTPEFIEDRG…VRTHSFHAIT (356 aa). Positions 489–611 constitute an HD domain; it reads VDEHLIRSVG…VQSLDRLRML (123 aa). 2 consecutive ACT domains span residues 729 to 810 and 840 to 919; these read EITV…EVIA and VIEI…LREQ. The interval 916 to 941 is disordered; the sequence is LREQMPSGIIAPAATKSPAAEKKARV.

It belongs to the GlnD family. Mg(2+) serves as cofactor.

The catalysed reaction is [protein-PII]-L-tyrosine + UTP = [protein-PII]-uridylyl-L-tyrosine + diphosphate. The enzyme catalyses [protein-PII]-uridylyl-L-tyrosine + H2O = [protein-PII]-L-tyrosine + UMP + H(+). Its activity is regulated as follows. Uridylyltransferase (UTase) activity is inhibited by glutamine, while glutamine activates uridylyl-removing (UR) activity. In terms of biological role, modifies, by uridylylation and deuridylylation, the PII regulatory proteins (GlnB and homologs), in response to the nitrogen status of the cell that GlnD senses through the glutamine level. Under low glutamine levels, catalyzes the conversion of the PII proteins and UTP to PII-UMP and PPi, while under higher glutamine levels, GlnD hydrolyzes PII-UMP to PII and UMP (deuridylylation). Thus, controls uridylylation state and activity of the PII proteins, and plays an important role in the regulation of nitrogen assimilation and metabolism. The chain is Bifunctional uridylyltransferase/uridylyl-removing enzyme from Allorhizobium ampelinum (strain ATCC BAA-846 / DSM 112012 / S4) (Agrobacterium vitis (strain S4)).